The primary structure comprises 99 residues: NADH-quinone oxidoreductase subunit K (99 aa).

The next 3 membrane-spanning stretches (helical) occupy residues 3-23 (PANY…GVLV), 28-48 (IVVF…LVTF), and 62-82 (FFVM…ILAI).

This sequence belongs to the complex I subunit 4L family. As to quaternary structure, NDH-1 is composed of 14 different subunits. Subunits NuoA, H, J, K, L, M, N constitute the membrane sector of the complex.

It localises to the cell membrane. It catalyses the reaction a quinone + NADH + 5 H(+)(in) = a quinol + NAD(+) + 4 H(+)(out). NDH-1 shuttles electrons from NADH, via FMN and iron-sulfur (Fe-S) centers, to quinones in the respiratory chain. The immediate electron acceptor for the enzyme in this species is believed to be a menaquinone. Couples the redox reaction to proton translocation (for every two electrons transferred, four hydrogen ions are translocated across the cytoplasmic membrane), and thus conserves the redox energy in a proton gradient. The sequence is that of NADH-quinone oxidoreductase subunit K from Parafrankia sp. (strain EAN1pec).